The primary structure comprises 152 residues: Superoxide dismutase [Cu-Zn] (152 aa).

Residues histidine 45, histidine 47, and histidine 62 each contribute to the Cu cation site. Cysteine 56 and cysteine 145 are oxidised to a cystine. The Zn(2+) site is built by histidine 62, histidine 70, histidine 79, and aspartate 82. Position 119 (histidine 119) interacts with Cu cation.

This sequence belongs to the Cu-Zn superoxide dismutase family. As to quaternary structure, homodimer. Requires Cu cation as cofactor. Zn(2+) is required as a cofactor.

It is found in the cytoplasm. It catalyses the reaction 2 superoxide + 2 H(+) = H2O2 + O2. In terms of biological role, destroys radicals which are normally produced within the cells and which are toxic to biological systems. This chain is Superoxide dismutase [Cu-Zn] (SODCC), found in Nicotiana plumbaginifolia (Leadwort-leaved tobacco).